A 193-amino-acid chain; its full sequence is Large ribosomal subunit protein uL18 (193 aa).

Belongs to the universal ribosomal protein uL18 family. Part of the 50S ribosomal subunit. Contacts the 5S and 23S rRNAs.

This is one of the proteins that bind and probably mediate the attachment of the 5S RNA into the large ribosomal subunit, where it forms part of the central protuberance. This chain is Large ribosomal subunit protein uL18, found in Methanosphaera stadtmanae (strain ATCC 43021 / DSM 3091 / JCM 11832 / MCB-3).